The following is a 53-amino-acid chain: Large ribosomal subunit protein eL24 (53 aa).

The Zn(2+) site is built by cysteine 4, cysteine 7, cysteine 30, and cysteine 34. A C4-type zinc finger spans residues 4-34 (CSFCNKEIEEGTGKMYVKKDGSIYFFCSSKC).

The protein belongs to the eukaryotic ribosomal protein eL24 family. In terms of assembly, part of the 50S ribosomal subunit. Forms a cluster with proteins L3 and L14. The cofactor is Zn(2+).

Functionally, binds to the 23S rRNA. The protein is Large ribosomal subunit protein eL24 of Methanobrevibacter smithii (strain ATCC 35061 / DSM 861 / OCM 144 / PS).